The primary structure comprises 79 residues: Serine rich endogenous peptide 2 (79 aa).

A signal peptide spans 1-19; the sequence is MANNLGLVILLLVIVLVSC. The tract at residues 25–79 is disordered; that stretch reads CALASPQKSRPSSEWRRKLIPVRSSRSPRSPSFAPKKPPPPPPSPPLSPSSPPSN. The short motif at 45 to 57 is the SCOOP motif element; it reads PVRSSRSPRSPSF. Residues 45–59 are compositionally biased toward low complexity; that stretch reads PVRSSRSPRSPSFAP. The short motif at 49 to 51 is the SxS motif essential for MIK2 binding element; the sequence is SRS. Positions 60–79 are enriched in pro residues; that stretch reads KKPPPPPPSPPLSPSSPPSN.

It belongs to the serine rich endogenous peptide (SCOOP) phytocytokine family. In terms of assembly, interacts with MIK2 (via extracellular leucine-rich repeat domain); this interaction triggers the formation of complex between MIK2 and the BAK1/SERK3 and SERK4 coreceptors, and subsequent BAK1 activation by phosphorylation.

It localises to the cell membrane. It is found in the secreted. The protein resides in the extracellular space. Its subcellular location is the apoplast. Functionally, brassicaceae-specific phytocytokine (plant endogenous peptide released into the apoplast) perceived by MIK2 in a BAK1/SERK3 and SERK4 coreceptors-dependent manner, that modulates various physiological and antimicrobial processes including growth prevention and reactive oxygen species (ROS) response regulation. This Arabidopsis thaliana (Mouse-ear cress) protein is Serine rich endogenous peptide 2.